We begin with the raw amino-acid sequence, 159 residues long: Cyclic pyranopterin monophosphate synthase (159 aa).

Residues 75 to 77 (LCH) and 113 to 114 (ME) contribute to the substrate site. Asp-128 is an active-site residue.

The protein belongs to the MoaC family. As to quaternary structure, homohexamer; trimer of dimers.

It carries out the reaction (8S)-3',8-cyclo-7,8-dihydroguanosine 5'-triphosphate = cyclic pyranopterin phosphate + diphosphate. Its pathway is cofactor biosynthesis; molybdopterin biosynthesis. Functionally, catalyzes the conversion of (8S)-3',8-cyclo-7,8-dihydroguanosine 5'-triphosphate to cyclic pyranopterin monophosphate (cPMP). In Vibrio atlanticus (strain LGP32) (Vibrio splendidus (strain Mel32)), this protein is Cyclic pyranopterin monophosphate synthase.